Consider the following 340-residue polypeptide: GPALPP motifs-containing protein 1 (340 aa).

Residues 1–304 (MARDLIGPAL…PQERIPFDRD (304 aa)) are disordered. A2 is subject to N-acetylalanine. The GPALPP motif 1 motif lies at 7-12 (GPALPP). S28 bears the Phosphoserine mark. A GPALPP motif 2 motif is present at residues 32–37 (GPALPP). Residues 60 to 69 (GNQESEEDDS) are compositionally biased toward acidic residues. Residues 92–97 (GPALPP) carry the GPALPP motif 3 motif. S105 is subject to Phosphoserine. Residues 107–116 (PRPIIGPALP) show a composition bias toward pro residues. Residues 112 to 117 (GPALPP) carry the GPALPP motif 4 motif. The segment covering 124-133 (QKSDKGRDDP) has biased composition (basic and acidic residues). Position 138 is a phosphothreonine (T138). Phosphoserine occurs at positions 140 and 141. Basic and acidic residues-rich tracts occupy residues 163–187 (EFEK…KPIV), 227–261 (PADR…KRLA), 269–279 (ESKRSESLMDI), and 287–304 (KAAE…FDRD). A Glycyl lysine isopeptide (Lys-Gly) (interchain with G-Cter in SUMO2) cross-link involves residue K271. Residue K308 forms a Glycyl lysine isopeptide (Lys-Gly) (interchain with G-Cter in SUMO2) linkage.

This is GPALPP motifs-containing protein 1 (GPALPP1) from Homo sapiens (Human).